The sequence spans 199 residues: 3-isopropylmalate dehydratase small subunit (199 aa).

It belongs to the LeuD family. LeuD type 1 subfamily. In terms of assembly, heterodimer of LeuC and LeuD.

The catalysed reaction is (2R,3S)-3-isopropylmalate = (2S)-2-isopropylmalate. It functions in the pathway amino-acid biosynthesis; L-leucine biosynthesis; L-leucine from 3-methyl-2-oxobutanoate: step 2/4. Catalyzes the isomerization between 2-isopropylmalate and 3-isopropylmalate, via the formation of 2-isopropylmaleate. This is 3-isopropylmalate dehydratase small subunit from Bacillus licheniformis (strain ATCC 14580 / DSM 13 / JCM 2505 / CCUG 7422 / NBRC 12200 / NCIMB 9375 / NCTC 10341 / NRRL NRS-1264 / Gibson 46).